A 527-amino-acid polypeptide reads, in one-letter code: Glutamyl-tRNA reductase 1, chloroplastic (527 aa).

The N-terminal 43 residues, 1–43 (MAGATSATAAAGAFAAAKARGPAAACPWLVAAGGRRRSGVVRC), are a transit peptide targeting the chloroplast. Substrate is bound by residues 124-127 (TCNR), Ser-184, 189-191 (EGQ), and Gln-195. Cys-125 acts as the Nucleophile in catalysis. 266 to 271 (GAGKMG) contacts NADP(+).

This sequence belongs to the glutamyl-tRNA reductase family. As to quaternary structure, homodimer.

Its subcellular location is the plastid. The protein localises to the chloroplast. The enzyme catalyses (S)-4-amino-5-oxopentanoate + tRNA(Glu) + NADP(+) = L-glutamyl-tRNA(Glu) + NADPH + H(+). Its pathway is porphyrin-containing compound metabolism; protoporphyrin-IX biosynthesis; 5-aminolevulinate from L-glutamyl-tRNA(Glu): step 1/2. In terms of biological role, catalyzes the NADPH-dependent reduction of glutamyl-tRNA(Glu) to glutamate 1-semialdehyde (GSA). The polypeptide is Glutamyl-tRNA reductase 1, chloroplastic (HEMA1) (Hordeum vulgare (Barley)).